The chain runs to 353 residues: Serine/threonine-protein phosphatase 2A activator 1 (353 aa).

Positions 331-353 (ANNATTKMPPPLSTSTSRFIHRR) are disordered. The segment covering 343 to 353 (STSTSRFIHRR) has biased composition (polar residues).

The protein belongs to the PTPA-type PPIase family.

The protein localises to the cytoplasm. Its subcellular location is the nucleus. It carries out the reaction [protein]-peptidylproline (omega=180) = [protein]-peptidylproline (omega=0). PPIases accelerate the folding of proteins. It catalyzes the cis-trans isomerization of proline imidic peptide bonds in oligopeptides. Acts as a regulatory subunit for PP2A-like phosphatases modulating their activity or substrate specificity, probably by inducing a conformational change in the catalytic subunit, a direct target of the PPIase. Can reactivate inactive phosphatase PP2A-phosphatase methylesterase complexes (PP2Ai) in presence of ATP and Mg(2+) by dissociating the inactive form from the complex. The sequence is that of Serine/threonine-protein phosphatase 2A activator 1 (RRD1) from Kluyveromyces lactis (strain ATCC 8585 / CBS 2359 / DSM 70799 / NBRC 1267 / NRRL Y-1140 / WM37) (Yeast).